The primary structure comprises 498 residues: ATP synthase subunit beta, chloroplastic (498 aa).

Residue 172–179 (GGAGVGKT) coordinates ATP.

The protein belongs to the ATPase alpha/beta chains family. In terms of assembly, F-type ATPases have 2 components, CF(1) - the catalytic core - and CF(0) - the membrane proton channel. CF(1) has five subunits: alpha(3), beta(3), gamma(1), delta(1), epsilon(1). CF(0) has four main subunits: a(1), b(1), b'(1) and c(9-12).

The protein localises to the plastid. It localises to the chloroplast thylakoid membrane. It catalyses the reaction ATP + H2O + 4 H(+)(in) = ADP + phosphate + 5 H(+)(out). In terms of biological role, produces ATP from ADP in the presence of a proton gradient across the membrane. The catalytic sites are hosted primarily by the beta subunits. The chain is ATP synthase subunit beta, chloroplastic from Sorghum bicolor (Sorghum).